The following is a 132-amino-acid chain: Small ribosomal subunit protein uS8 (132 aa).

The protein belongs to the universal ribosomal protein uS8 family. Part of the 30S ribosomal subunit. Contacts proteins S5 and S12.

In terms of biological role, one of the primary rRNA binding proteins, it binds directly to 16S rRNA central domain where it helps coordinate assembly of the platform of the 30S subunit. In Anaeromyxobacter sp. (strain Fw109-5), this protein is Small ribosomal subunit protein uS8.